Reading from the N-terminus, the 337-residue chain is Primase homolog protein (337 aa).

The Toprim domain maps to 205–304; sequence SEIIIVEGEP…WLVKWPKKSE (100 aa). Residues Glu-211, Asp-273, and Asp-275 each coordinate Mg(2+).

Mg(2+) is required as a cofactor.

May act as a DNA primase. The chain is Primase homolog protein from Arabidopsis thaliana (Mouse-ear cress).